A 248-amino-acid polypeptide reads, in one-letter code: tRNA (guanine-N(1)-)-methyltransferase (248 aa).

S-adenosyl-L-methionine contacts are provided by residues Gly-113 and 133–138 (IGDYVL).

This sequence belongs to the RNA methyltransferase TrmD family. In terms of assembly, homodimer.

The protein localises to the cytoplasm. The catalysed reaction is guanosine(37) in tRNA + S-adenosyl-L-methionine = N(1)-methylguanosine(37) in tRNA + S-adenosyl-L-homocysteine + H(+). In terms of biological role, specifically methylates guanosine-37 in various tRNAs. This Shewanella baltica (strain OS223) protein is tRNA (guanine-N(1)-)-methyltransferase.